Reading from the N-terminus, the 321-residue chain is Geranylgeranyl transferase type-2 subunit beta 1 (321 aa).

Serine 2 carries the post-translational modification N-acetylserine. PFTB repeat units lie at residues 14-55 (ADKH…DLLD), 62-103 (EEEV…ALFD), 110-151 (IGKV…SILK), 158-199 (VEKA…AITG), 206-247 (KDSL…IMID), and 254-296 (KAKL…SLLE). Geranylgeranyl diphosphate contacts are provided by residues 184–186 (HAG) and 226–229 (RPEK). Zn(2+) contacts are provided by aspartate 232 and cysteine 234. 235-238 (YSWW) contributes to the geranylgeranyl diphosphate binding site. Histidine 284 is a Zn(2+) binding site.

The protein belongs to the protein prenyltransferase subunit beta family. In terms of assembly, heterotrimer composed of the alpha subunit RGTA, the beta subunit RGTB and REP; within this trimer, RGTA and RGTB form the catalytic component, while REP mediates peptide substrate binding. The cofactor is Zn(2+). Requires Mg(2+) as cofactor.

It catalyses the reaction geranylgeranyl diphosphate + L-cysteinyl-[protein] = S-geranylgeranyl-L-cysteinyl-[protein] + diphosphate. With respect to regulation, the enzymatic reaction requires the aid of the Rab escort protein REP. Functionally, catalyzes the transfer of a geranylgeranyl moiety from geranylgeranyl diphosphate to both cysteines of Rab proteins with the C-terminal sequence -CCXX, CXXX, -XCCX and -XCXC, such as RABA1A, RABA2A, RABF2A and RABG2. Involved in the geranylgeranylation of RABA2A. In vitro, can prenylate PGGTI targets with the C-terminal sequence Cys-aliphatic-aliphatic-X (CaaX) with leucine in the terminal position. Substrates with the C-terminal sequence -CSIL such as ARAC11/ROP1 or GG2/AGG2 are prenylated independently of REP and when the beta subunit is associated with the alpha subunit RGTA1. In terms of biological role, required for male fertility and root tip growth. This is Geranylgeranyl transferase type-2 subunit beta 1 from Arabidopsis thaliana (Mouse-ear cress).